We begin with the raw amino-acid sequence, 739 residues long: Nuclear pore complex protein NUP62 (739 aa).

A run of 19 repeats spans residues 6–7 (FG), 17–18 (FG), 50–51 (FG), 52–53 (FG), 68–69 (FG), 70–71 (FG), 78–79 (FG), 80–81 (FG), 91–92 (FG), 93–94 (FG), 108–109 (FG), 110–111 (FG), 124–125 (FG), 141–142 (FG), 159–160 (FG), 174–175 (FG), 186–187 (FG), 207–208 (FG), and 221–222 (FG). The tract at residues 6-450 (FGQSNSVGGF…AATFSTTGFG (445 aa)) is 26 X 2 AA repeats of F-G. The disordered stretch occupies residues 18–67 (GSSSATNSSSASSTTSPLSFSFNQSSNPSSTGFGFGSSVSSTPASSTTPS). Positions 79 to 218 (GFGSSASSST…ASSSAATSTS (140 aa)) are enriched in low complexity. The tract at residues 79-245 (GFGSSASSST…VASSAPGSSS (167 aa)) is disordered. Positions 232 to 245 (PSFSVASSAPGSSS) are enriched in low complexity. Tandem repeats lie at residues 248–249 (FG), 271–272 (FG), 280–281 (FG), 308–309 (FG), and 366–367 (FG). Disordered stretches follow at residues 281-329 (GSSS…ASPF), 341-366 (TASS…SFSF), and 399-418 (TTTS…SAPA). Tandem repeats lie at residues 426–427 (FG) and 449–450 (FG). Residues 471-533 (KTSTPASSSQ…AVAPVAGSPK (63 aa)) form a disordered region. Residues 472–519 (TSTPASSSQPQTTSPAFSFSLPSSTSTTAPATSSATTTQTTLVVPSSS) show a composition bias toward low complexity. Positions 584 to 674 (RLEIEVAKVV…IRSIIQSVNA (91 aa)) form a coiled coil.

It belongs to the nucleoporin NSP1/NUP62 family. Part of the nuclear pore complex (NPC). The NPC has an eight-fold symmetrical structure comprising a central transport channel and two rings, the cytoplasmic and nuclear rings, to which eight filaments are attached. The cytoplasmic filaments have loose ends, while the nuclear filaments are joined in a distal ring, forming a nuclear basket. NPCs are highly dynamic in configuration and composition, and can be devided in 3 subcomplexes, the NUP62 subcomplex, the NUP107-160 subcomplex and the NUP93 subcomplex, containing approximately 30 different nucleoporin proteins. Interacts with NUP58 and the importin KPNB1.

It is found in the nucleus envelope. It localises to the nucleus. The protein resides in the nuclear pore complex. The sequence is that of Nuclear pore complex protein NUP62 from Arabidopsis thaliana (Mouse-ear cress).